Consider the following 465-residue polypeptide: Fujikurins efflux protein FFUJ_12242 (465 aa).

The disordered stretch occupies residues 1–66; the sequence is MATNVGGAVD…AAKAHDEGPP (66 aa). Residues 11–28 are compositionally biased toward basic and acidic residues; that stretch reads NSRRSISDNRHDPEKPAE. Transmembrane regions (helical) follow at residues 70–90, 115–135, 142–162, 175–195, 200–220, 231–251, and 274–294; these read TAAW…PGWI, WIPS…GIIF, PLII…SLAK, SAIG…TWFL, AAMG…PIMI, WALR…CLTV, and PAFA…YIPI. Residue N310 is glycosylated (N-linked (GlcNAc...) asparagine). Transmembrane regions (helical) follow at residues 314–334, 342–362, 368–388, 404–424, and 430–450; these read YLVA…GYGA, MFII…IPAT, IGYA…VGAL, IVFL…GAIL, and GWVS…AIIL.

The protein belongs to the major facilitator superfamily. Monocarboxylate porter (TC 2.A.1.13) family.

It localises to the cell membrane. Its function is as follows. Efflux pump that may be involved in the secretion of fujikurins. In Gibberella fujikuroi (strain CBS 195.34 / IMI 58289 / NRRL A-6831) (Bakanae and foot rot disease fungus), this protein is Fujikurins efflux protein FFUJ_12242.